Here is a 2548-residue protein sequence, read N- to C-terminus: Unconventional myosin-IXa (2548 aa).

One can recognise a Ras-associating domain in the interval 14–112 (NEHTLRIYPG…YRFLLREKNL (99 aa)). One can recognise a Myosin motor domain in the interval 146 to 1016 (KDFDDLCSLP…ERQHLQDLLH (871 aa)). Residues 175-195 (IYTYVGSILIVINPFKFLPIY) form a helical membrane-spanning segment. An ATP-binding site is contributed by 239–246 (GESGSGKT). S755 is subject to Phosphoserine. Residues 898–920 (LSKLMETLGQAEPYFVKCIRSNA) are actin-binding. IQ domains are found at residues 1021 to 1041 (RRII…HFLH), 1042 to 1071 (LRQA…QKDA), 1074 to 1103 (MASA…AAIV), 1115 to 1144 (RHMA…KIIL), and 1138 to 1167 (QRKK…QRLR). The tract at residues 1021–1162 (RRIILLQRWF…RARQRFKALK (142 aa)) is neck or regulatory domain. The segment at 1163-2511 (EQRLRETKPE…LKNVKNSPQK (1349 aa)) is tail. A compositionally biased stretch (basic and acidic residues) spans 1223-1236 (SVDCLKESPNKQQE). Residues 1223–1250 (SVDCLKESPNKQQERAQSQSGVDLQEDV) form a disordered region. 2 positions are modified to phosphoserine: S1242 and S1258. Residues 1264–1291 (QKKVGRAKRESRRMRELEQAIFSLELLK) are a coiled coil. 2 positions are modified to phosphoserine: S1299 and S1317. The segment at 1299–1386 (SPSEDRRWST…SNETSSAEHL (88 aa)) is disordered. Composition is skewed to low complexity over residues 1324 to 1337 (SESS…LSYE) and 1356 to 1366 (FPSPKISSSPK). S1364 carries the post-translational modification Phosphoserine. The segment covering 1372–1381 (NALSASNETS) has biased composition (polar residues). Residues 1486–1532 (VLKKLEKLNTEKEERQKQLQQQNEKEMMEQIRQQTDILEKERKAFKT) adopt a coiled-coil conformation. The segment at 1804-1836 (YHPTPPLSPELPGSCRKEFKENKEPSPKAKRKR) is disordered. The span at 1818–1830 (CRKEFKENKEPSP) shows a compositional bias: basic and acidic residues. The residue at position 1948 (S1948) is a Phosphoserine. Phorbol-ester/DAG-type zinc fingers lie at residues 1999 to 2048 (GHIF…TAKC) and 2068 to 2119 (LTSE…DAES). Residues 2063-2251 (VELSRLTSED…LIVVEQMNKY (189 aa)) enclose the Rho-GAP domain. At S2294 the chain carries Phosphoserine. A coiled-coil region spans residues 2315–2358 (AAMETDITEQQQAAMQQEERVLTEQIENLQKEKEELTFEMLVLE). Disordered stretches follow at residues 2359–2383 (PRAS…ENLN) and 2401–2424 (SSLK…KQQD). Phosphoserine is present on S2464. Residues 2490–2531 (RGTFNPEKGKQKLKNVKNSPQKTKETPEGTVMSGRRKTVDPD) form a disordered region.

The protein belongs to the TRAFAC class myosin-kinesin ATPase superfamily. Myosin family. Post-translationally, phosphorylated by ALPK1 following monosodium urate monohydrate (MSU)-induced inflammation. Found to be expressed in testis and placenta and at lower levels in all the examined tissues with the exception of liver. Isoform 5: Found in leukocytes but not in brain, retina or testis.

Its subcellular location is the membrane. It is found in the cytoplasm. The protein localises to the synapse. It localises to the cell projection. The protein resides in the growth cone. Its function is as follows. Myosins are actin-based motor molecules with ATPase activity. Unconventional myosins serve in intracellular movements. Regulates Rho by stimulating it's GTPase activity in neurons. Required for the regulation of neurite branching and motor neuron axon guidance. This Homo sapiens (Human) protein is Unconventional myosin-IXa (MYO9A).